A 236-amino-acid chain; its full sequence is Endonuclease V (236 aa).

2 residues coordinate Mg(2+): Asp47 and Asp115.

This sequence belongs to the endonuclease V family. It depends on Mg(2+) as a cofactor.

The protein resides in the cytoplasm. The catalysed reaction is Endonucleolytic cleavage at apurinic or apyrimidinic sites to products with a 5'-phosphate.. DNA repair enzyme involved in the repair of deaminated bases. Selectively cleaves double-stranded DNA at the second phosphodiester bond 3' to a deoxyinosine leaving behind the intact lesion on the nicked DNA. In Xanthomonas campestris pv. campestris (strain B100), this protein is Endonuclease V.